We begin with the raw amino-acid sequence, 143 residues long: MFKEFREFAMKGNVVDLAVGVIIGAAFGGIVSSLVADVIMPIIGAITGGLDFSNYFTPLSKAVTANTLVEAKKQGAVLAWGSFLTLTLNFLIVAFVLFLVVRAMNRLKRKDEAAPAPPAKPTPEQELLAEIRDILKSGSRPQA.

The next 2 helical transmembrane spans lie at 19–39 (VGVIIGAAFGGIVSSLVADVI) and 81–101 (GSFLTLTLNFLIVAFVLFLVV).

It belongs to the MscL family. In terms of assembly, homopentamer.

It is found in the cell inner membrane. Its function is as follows. Channel that opens in response to stretch forces in the membrane lipid bilayer. May participate in the regulation of osmotic pressure changes within the cell. This chain is Large-conductance mechanosensitive channel, found in Rhodopseudomonas palustris (strain HaA2).